Consider the following 608-residue polypeptide: RAS guanyl-releasing protein 2 (608 aa).

Residues 4–126 (TLDLDKGCTV…SLIDIESVPT (123 aa)) form the N-terminal Ras-GEF domain. Phosphoserine is present on residues Ser116, Ser117, and Ser147. One can recognise a Ras-GEF domain in the interval 154–387 (EPMELAEHLT…YQLSLQREPR (234 aa)). Residues 382–405 (LQREPRSKSSPTSPTSCTPPPRPP) form a disordered region. 2 consecutive EF-hand domains span residues 426-461 (HIEK…FPYL) and 463-490 (AFGD…SSSV). Ca(2+)-binding residues include Asp439, Asp441, Asp443, His445, Glu450, Asp468, Asn470, Asp472, Cys474, and Glu479. The Phorbol-ester/DAG-type zinc-finger motif lies at 498 to 548 (VHNFQESNSLRPVACRHCKALILGIYKQGLKCRACGVNCHKQCKERLSVEC). 2 positions are modified to phosphoserine: Ser554 and Ser575. Positions 555–596 (VSLEGSAPSPSPTHTHHRAFSFSLPRPGRRSSRPPEIREEEV) are disordered.

It belongs to the RASGRP family. In terms of assembly, forms a signaling complex with RAP1 and BRAF. Interacts with F-actin. Interacts with RAP1. As to expression, detected in megakaryocytes, platelet and neutrophils but not in lymphocytes (at protein level). Isoform 1 and isoform 3 are detected in brain basal glanglia, heart, lung, spleen, liver and kidney interstitial cells.

Its subcellular location is the cytoplasm. The protein resides in the cytosol. It is found in the cell membrane. It localises to the synapse. The protein localises to the synaptosome. Its subcellular location is the cell projection. The protein resides in the ruffle membrane. Functionally, functions as a calcium- and DAG-regulated nucleotide exchange factor specifically activating Rap through the exchange of bound GDP for GTP. May also activate other GTPases such as RRAS, RRAS2, NRAS, KRAS but not HRAS. Functions in aggregation of platelets and adhesion of T-lymphocytes and neutrophils probably through inside-out integrin activation. May function in the muscarinic acetylcholine receptor M1/CHRM1 signaling pathway. This Mus musculus (Mouse) protein is RAS guanyl-releasing protein 2 (Rasgrp2).